The chain runs to 356 residues: Protein-arginine kinase (356 aa).

Residues 24-254 (IVLSSRIRLA…MQLIQQERAA (231 aa)) form the Phosphagen kinase C-terminal domain. ATP is bound by residues 27–31 (SSRIR), histidine 91, arginine 125, 176–180 (RASVM), and 207–212 (RGIYGE). Residues 337 to 342 (RDERRA) carry the RDXXRA motif of the pArg binding pocket involved in allosteric regulation motif.

This sequence belongs to the ATP:guanido phosphotransferase family.

The catalysed reaction is L-arginyl-[protein] + ATP = N(omega)-phospho-L-arginyl-[protein] + ADP + H(+). Its activity is regulated as follows. Appears to be allosterically activated by the binding of pArg-containing polypeptides to the pArg-binding pocket localized in the C-terminal domain of McsB. Its function is as follows. Catalyzes the specific phosphorylation of arginine residues in a large number of proteins. Is part of the bacterial stress response system. Protein arginine phosphorylation has a physiologically important role and is involved in the regulation of many critical cellular processes, such as protein homeostasis, motility, competence, and stringent and stress responses, by regulating gene expression and protein activity. The protein is Protein-arginine kinase of Halalkalibacterium halodurans (strain ATCC BAA-125 / DSM 18197 / FERM 7344 / JCM 9153 / C-125) (Bacillus halodurans).